The sequence spans 941 residues: Isoleucine--tRNA ligase (941 aa).

The 'HIGH' region motif lies at 58-68; it reads PYANGNIHIGH. Glutamate 564 contributes to the L-isoleucyl-5'-AMP binding site. The 'KMSKS' region motif lies at 605–609; that stretch reads KMSKS. Residue lysine 608 participates in ATP binding. Zn(2+) contacts are provided by cysteine 904, cysteine 907, cysteine 924, and cysteine 927.

It belongs to the class-I aminoacyl-tRNA synthetase family. IleS type 1 subfamily. As to quaternary structure, monomer. Zn(2+) is required as a cofactor.

The protein localises to the cytoplasm. The catalysed reaction is tRNA(Ile) + L-isoleucine + ATP = L-isoleucyl-tRNA(Ile) + AMP + diphosphate. In terms of biological role, catalyzes the attachment of isoleucine to tRNA(Ile). As IleRS can inadvertently accommodate and process structurally similar amino acids such as valine, to avoid such errors it has two additional distinct tRNA(Ile)-dependent editing activities. One activity is designated as 'pretransfer' editing and involves the hydrolysis of activated Val-AMP. The other activity is designated 'posttransfer' editing and involves deacylation of mischarged Val-tRNA(Ile). The protein is Isoleucine--tRNA ligase of Buchnera aphidicola subsp. Cinara cedri (strain Cc).